Consider the following 450-residue polypeptide: UPF0236 protein in vanSb 3'region (450 aa).

This sequence belongs to the UPF0236 family.

In Streptococcus gallolyticus (Streptococcus bovis biotype I), this protein is UPF0236 protein in vanSb 3'region.